The following is a 1477-amino-acid chain: Alpha-1-inhibitor 3 (1477 aa).

The first 24 residues, 1–24, serve as a signal peptide directing secretion; that stretch reads MKKDREAQLCLFSALLAFLPFASL. A disulfide bridge connects residues Cys48 and Cys86. 2 N-linked (GlcNAc...) asparagine glycosylation sites follow: Asn55 and Asn247. Cystine bridges form between Cys251–Cys295 and Cys269–Cys283. Asn301, Asn321, Asn393, and Asn508 each carry an N-linked (GlcNAc...) asparagine glycan. Disulfide bonds link Cys468/Cys563, Cys595/Cys774, and Cys643/Cys678. Residues 601–750 are bait region (approximate); that stretch reads DQSVLLQKPE…TWIWDLVTVN (150 aa). N-linked (GlcNAc...) asparagine glycosylation is found at Asn750, Asn777, and Asn872. Cystine bridges form between Cys850-Cys886, Cys924-Cys1324, Cys1082-Cys1130, and Cys1355-Cys1470. A cross-link (isoglutamyl cysteine thioester (Cys-Gln)) is located at residues 975–978; sequence CGEQ. A glycan (N-linked (GlcNAc...) asparagine) is linked at Asn994. Residues Asn1143, Asn1314, and Asn1427 are each glycosylated (N-linked (GlcNAc...) asparagine).

The protein belongs to the protease inhibitor I39 (alpha-2-macroglobulin) family. Monomer.

The protein resides in the secreted. Functionally, protease inhibitor with a wide spectrum of protein targets, which attaches through its thioester function. This is Alpha-1-inhibitor 3 (A1i3) from Rattus norvegicus (Rat).